A 98-amino-acid polypeptide reads, in one-letter code: DNA-binding protein Fis (98 aa).

A DNA-binding region (H-T-H motif) is located at residues Gln-74–Lys-93.

Belongs to the transcriptional regulatory Fis family. Homodimer.

In terms of biological role, activates ribosomal RNA transcription. Plays a direct role in upstream activation of rRNA promoters. This Aeromonas hydrophila subsp. hydrophila (strain ATCC 7966 / DSM 30187 / BCRC 13018 / CCUG 14551 / JCM 1027 / KCTC 2358 / NCIMB 9240 / NCTC 8049) protein is DNA-binding protein Fis.